Consider the following 68-residue polypeptide: Probable tautomerase Cj0270 (68 aa).

Catalysis depends on Pro-2, which acts as the Proton acceptor; via imino nitrogen.

The protein belongs to the 4-oxalocrotonate tautomerase family.

In Campylobacter jejuni subsp. jejuni serotype O:2 (strain ATCC 700819 / NCTC 11168), this protein is Probable tautomerase Cj0270.